A 233-amino-acid polypeptide reads, in one-letter code: Protein Mis18-alpha (233 aa).

Phosphoserine occurs at positions 36, 39, and 40. One can recognise a Mis18 domain in the interval 80 to 178 (PLVFLCSGCR…NVEAVESYVL (99 aa)). The Zn(2+) site is built by Cys85, Cys88, Cys141, and Cys144. Lys162 is covalently cross-linked (Glycyl lysine isopeptide (Lys-Gly) (interchain with G-Cter in SUMO2)). Ser233 bears the Phosphoserine mark.

This sequence belongs to the mis18 family. In terms of assembly, homodimer, and heterodimer with OIP5/MIS18B. Identified in a complex containing MIS18A, OIP5/MIS18B, MIS18BP1, RBBP7 and RBBP4.

The protein localises to the nucleus. It localises to the chromosome. It is found in the centromere. Its function is as follows. Required for recruitment of CENPA to centromeres and normal chromosome segregation during mitosis. This Plecturocebus moloch (Dusky titi monkey) protein is Protein Mis18-alpha (MIS18A).